Reading from the N-terminus, the 862-residue chain is Kinesin-like protein KIN-7J (862 aa).

The 323-residue stretch at 9–331 folds into the Kinesin motor domain; that stretch reads RIVVSVRLRP…LLFANCAKDV (323 aa). 95–102 serves as a coordination point for ATP; sequence GQTSSGKT. The stretch at 340–415 forms a coiled coil; the sequence is VMSDKALVKH…NFRKVASDGD (76 aa). Basic and acidic residues-rich tracts occupy residues 475–499 and 518–531; these read EEHE…KEVQ and PEKK…KHSE. 2 disordered regions span residues 475–532 and 596–643; these read EEHE…HSES and DDSA…STCN. The segment covering 598–610 has biased composition (polar residues); it reads SASTTPSSETFRY. Residues 613–629 are compositionally biased toward basic and acidic residues; that stretch reads RRPEKVRKSLSPDEIAD.

Belongs to the TRAFAC class myosin-kinesin ATPase superfamily. Kinesin family. KIN-7 subfamily.

In Oryza sativa subsp. japonica (Rice), this protein is Kinesin-like protein KIN-7J.